An 855-amino-acid chain; its full sequence is Transcription factor gaf1 (855 aa).

Positions 72-112 are enriched in polar residues; that stretch reads KNLTPNGDSNTLTPDTFSDPTAPSSAQSVPPTSSAETTADN. Disordered stretches follow at residues 72-126, 149-184, 229-287, 412-483, 602-643, and 680-768; these read KNLT…PAYS, TSFD…ESQP, SHNL…GFPS, PNSN…DMFS, NKNA…TRTT, and KKRN…SQSM. A compositionally biased stretch (basic and acidic residues) spans 149–168; that stretch reads TSFDESTAKSKKRSIADSHF. Phosphoserine is present on serine 150. 2 stretches are compositionally biased toward low complexity: residues 240 to 250 and 428 to 444; these read PANSNNSASPN and NSSK…DSNQ. Residues 445 to 476 are compositionally biased toward polar residues; that stretch reads ENAESFNPSISSHNSAEWASGETTGHSSNSPL. The span at 614-623 shows a compositional bias: basic and acidic residues; that stretch reads AEDKKGDANT. Composition is skewed to low complexity over residues 625–643 and 707–717; these read RANA…TRTT and SKSSSAKSTAA. The GATA-type zinc-finger motif lies at 635–659; that stretch reads CTNCQTRTTPLWRRSPDGQPLCNAC. Residues serine 727 and serine 729 each carry the phosphoserine modification. Over residues 755–767 the composition is skewed to low complexity; sequence QQQSSENESKSQS.

The protein localises to the nucleus. Its function is as follows. Transcriptional activator. The chain is Transcription factor gaf1 (gaf1) from Schizosaccharomyces pombe (strain 972 / ATCC 24843) (Fission yeast).